The sequence spans 598 residues: Aspartate--tRNA(Asp/Asn) ligase (598 aa).

Glu-177 contacts L-aspartate. The interval 201-204 (QLFK) is aspartate. An L-aspartate-binding site is contributed by Arg-223. ATP-binding positions include 223-225 (RDE) and Gln-232. Residue His-456 participates in L-aspartate binding. Glu-493 is an ATP binding site. Residue Arg-500 participates in L-aspartate binding. Residue 545–548 (GLDR) participates in ATP binding.

It belongs to the class-II aminoacyl-tRNA synthetase family. Type 1 subfamily. Homodimer.

The protein localises to the cytoplasm. It catalyses the reaction tRNA(Asx) + L-aspartate + ATP = L-aspartyl-tRNA(Asx) + AMP + diphosphate. Its function is as follows. Aspartyl-tRNA synthetase with relaxed tRNA specificity since it is able to aspartylate not only its cognate tRNA(Asp) but also tRNA(Asn). Reaction proceeds in two steps: L-aspartate is first activated by ATP to form Asp-AMP and then transferred to the acceptor end of tRNA(Asp/Asn). In Prochlorococcus marinus (strain MIT 9301), this protein is Aspartate--tRNA(Asp/Asn) ligase.